Here is a 442-residue protein sequence, read N- to C-terminus: Proline--tRNA ligase (442 aa).

It belongs to the class-II aminoacyl-tRNA synthetase family. ProS type 2 subfamily. Homodimer.

Its subcellular location is the cytoplasm. The catalysed reaction is tRNA(Pro) + L-proline + ATP = L-prolyl-tRNA(Pro) + AMP + diphosphate. Catalyzes the attachment of proline to tRNA(Pro) in a two-step reaction: proline is first activated by ATP to form Pro-AMP and then transferred to the acceptor end of tRNA(Pro). The protein is Proline--tRNA ligase of Mesorhizobium japonicum (strain LMG 29417 / CECT 9101 / MAFF 303099) (Mesorhizobium loti (strain MAFF 303099)).